The primary structure comprises 352 residues: 3-dehydroquinate synthase (352 aa).

NAD(+) is bound by residues 60-65 (DGEGAK), 118-119 (TT), K131, K140, and 158-161 (FLET). Zn(2+) is bound by residues E173, H237, and H253.

It belongs to the sugar phosphate cyclases superfamily. Dehydroquinate synthase family. NAD(+) is required as a cofactor. The cofactor is Co(2+). Zn(2+) serves as cofactor.

The protein localises to the cytoplasm. The enzyme catalyses 7-phospho-2-dehydro-3-deoxy-D-arabino-heptonate = 3-dehydroquinate + phosphate. It participates in metabolic intermediate biosynthesis; chorismate biosynthesis; chorismate from D-erythrose 4-phosphate and phosphoenolpyruvate: step 2/7. Functionally, catalyzes the conversion of 3-deoxy-D-arabino-heptulosonate 7-phosphate (DAHP) to dehydroquinate (DHQ). The protein is 3-dehydroquinate synthase of Sulfurisphaera tokodaii (strain DSM 16993 / JCM 10545 / NBRC 100140 / 7) (Sulfolobus tokodaii).